Consider the following 202-residue polypeptide: Small ribosomal subunit protein uS5 (202 aa).

Positions M1 to G13 are enriched in gly residues. A disordered region spans residues M1–K31. Residues S14–S23 show a composition bias toward basic and acidic residues. Residues Y34 to V97 enclose the S5 DRBM domain.

The protein belongs to the universal ribosomal protein uS5 family. As to quaternary structure, part of the 30S ribosomal subunit. Contacts proteins S4 and S8.

With S4 and S12 plays an important role in translational accuracy. In terms of biological role, located at the back of the 30S subunit body where it stabilizes the conformation of the head with respect to the body. This Frankia casuarinae (strain DSM 45818 / CECT 9043 / HFP020203 / CcI3) protein is Small ribosomal subunit protein uS5.